The following is a 303-amino-acid chain: Probable 5-dehydro-4-deoxyglucarate dehydratase (303 aa).

This sequence belongs to the DapA family.

The enzyme catalyses 5-dehydro-4-deoxy-D-glucarate + H(+) = 2,5-dioxopentanoate + CO2 + H2O. The protein operates within carbohydrate acid metabolism; D-glucarate degradation; 2,5-dioxopentanoate from D-glucarate: step 2/2. The protein is Probable 5-dehydro-4-deoxyglucarate dehydratase of Paracidovorax citrulli (strain AAC00-1) (Acidovorax citrulli).